A 501-amino-acid polypeptide reads, in one-letter code: Monocarboxylate transporter 1 (501 aa).

Residues 1–22 (MPPAVGGPVGYTPPDGGWGWAV) are Cytoplasmic-facing. A helical transmembrane segment spans residues 23–44 (VIGAFISIGFSYAFPKSITVFF). Lys38 is a binding site for (S)-lactate. Topologically, residues 45 to 55 (KEIEGIFNATT) are extracellular. A helical membrane pass occupies residues 56-80 (SEVSWISSIMLAVMYGGGPISSVLV). At 81–84 (NKYG) the chain is on the cytoplasmic side. Residues 85–105 (SRPVMIVGGILSGSGLIAASF) form a helical membrane-spanning segment. Residues 106–109 (CNTV) lie on the Extracellular side of the membrane. A helical membrane pass occupies residues 110-132 (QELYFSVGVIGGLGLAFNLNPAL). Residues 133 to 146 (TMIGKYFYKRRPLA) lie on the Cytoplasmic side of the membrane. Residues 147–169 (NGLAMAGSPVFLSTLAPLNQAFF) form a helical membrane-spanning segment. The Extracellular portion of the chain corresponds to 170-174 (MIYGW). Residues 175 to 194 (RGSFLILGGLLLNCCVAGAL) traverse the membrane as a helical segment. At 195 to 261 (MRPIGPKPTT…FLDLSLFKHR (67 aa)) the chain is on the cytoplasmic side. The disordered stretch occupies residues 201–236 (KPTTAEKEKSKGSLQEAGKYETKKGASDANTDLIGG). A phosphoserine mark is found at Ser210, Ser213, and Ser227. Thr231 is modified (phosphothreonine). Residues 262 to 288 (GFLLYLSGNVLMFFGLFTPLVFLSNYG) traverse the membrane as a helical segment. Topologically, residues 289 to 295 (KSKHYSS) are extracellular. A helical transmembrane segment spans residues 296 to 317 (EKAAFLLSILAFVDMVARPSMG). Asp309 provides a ligand contact to H(+). Arg313 lines the (S)-lactate pocket. The Cytoplasmic portion of the chain corresponds to 318–328 (LVANTKWVRPR). A helical transmembrane segment spans residues 329 to 349 (VQYFFAASIIANGLCHLAAPL). Over 350–353 (SSTY) the chain is Extracellular. The helical transmembrane segment at 354–375 (IELCIYAGFFGFAFGWLSSVLF) threads the bilayer. Topologically, residues 376-389 (ETLMDLVGPQRFSS) are cytoplasmic. A helical transmembrane segment spans residues 390–410 (AVGLVTIVECCPVLLGPPVLG). Over 411 to 421 (RLNDIYGDYKY) the chain is Extracellular. A helical transmembrane segment spans residues 422-443 (TYWACGIILIVAGIYLFIGMGI). The Cytoplasmic portion of the chain corresponds to 444–501 (NYRLLEKEQKAEKQQKKESKDEETNVDVAEKPKEVIDAAESPEHKATEEDPKEAESPV). Positions 454–501 (AEKQQKKESKDEETNVDVAEKPKEVIDAAESPEHKATEEDPKEAESPV) are disordered. Phosphoserine is present on Ser462. A Phosphothreonine modification is found at Thr467. A phosphoserine mark is found at Ser484 and Ser499.

It belongs to the major facilitator superfamily. Monocarboxylate porter (TC 2.A.1.13) family. Interacts with BSG; interaction mediates SLC16A1 targeting to the plasma membrane. Interacts with EMB; interaction mediates SLC16A1 targeting to the plasma membrane.

It localises to the cell membrane. It is found in the basolateral cell membrane. The protein localises to the apical cell membrane. It carries out the reaction (S)-lactate(in) + H(+)(in) = (S)-lactate(out) + H(+)(out). The enzyme catalyses acetate(out) + H(+)(out) = acetate(in) + H(+)(in). The catalysed reaction is acetoacetate(out) + H(+)(out) = acetoacetate(in) + H(+)(in). It catalyses the reaction pyruvate(out) + H(+)(out) = pyruvate(in) + H(+)(in). It carries out the reaction (R)-3-hydroxybutanoate(out) + H(+)(out) = (R)-3-hydroxybutanoate(in) + H(+)(in). The enzyme catalyses 3-methyl-2-oxobutanoate(out) + H(+)(out) = 3-methyl-2-oxobutanoate(in) + H(+)(in). The catalysed reaction is 4-methyl-2-oxopentanoate(out) + H(+)(out) = 4-methyl-2-oxopentanoate(in) + H(+)(in). It catalyses the reaction succinate(in) + 2 H(+)(in) = succinate(out) + 2 H(+)(out). Functionally, bidirectional proton-coupled monocarboxylate transporter. Catalyzes the rapid transport across the plasma membrane of many monocarboxylates such as lactate, pyruvate, acetate and the ketone bodies acetoacetate and beta-hydroxybutyrate, and thus contributes to the maintenance of intracellular pH. The transport direction is determined by the proton motive force and the concentration gradient of the substrate monocarboxylate. MCT1 is a major lactate exporter. Plays a role in cellular responses to a high-fat diet by modulating the cellular levels of lactate and pyruvate that contribute to the regulation of central metabolic pathways and insulin secretion, with concomitant effects on plasma insulin levels and blood glucose homeostasis. Facilitates the protonated monocarboxylate form of succinate export, that its transient protonation upon muscle cell acidification in exercising muscle and ischemic heart. Functions via alternate outward- and inward-open conformation states. Protonation and deprotonation of 309-Asp is essential for the conformational transition. The polypeptide is Monocarboxylate transporter 1 (SLC16A1) (Bos taurus (Bovine)).